We begin with the raw amino-acid sequence, 219 residues long: Response regulator ArlR (219 aa).

Residues 3 to 116 enclose the Response regulatory domain; sequence NILIVEDEQN…ELLARIRAVL (114 aa). D52 carries the post-translational modification 4-aspartylphosphate. Residues 122–219 constitute a DNA-binding region (ompR/PhoB-type); the sequence is KDVLDINGII…TVRGVGYVIR (98 aa).

In terms of processing, phosphorylated by ArlS.

The protein localises to the cytoplasm. Functionally, member of the two-component regulatory system ArlS/ArlR. This is Response regulator ArlR (arlR) from Staphylococcus epidermidis (strain ATCC 12228 / FDA PCI 1200).